Reading from the N-terminus, the 614-residue chain is NADH-quinone oxidoreductase subunit L (614 aa).

The next 15 helical transmembrane spans lie at 1-21 (MSII…LSTI), 33-53 (IGIF…VSIL), 79-99 (FFLD…GLLI), 136-156 (FLFM…LIGF), 168-188 (FKAF…MFLI), 207-227 (LNVE…LGVI), 247-267 (TPVS…YLIA), 271-291 (FLFL…TLTI), 327-347 (AWSA…LLFL), 372-392 (LPFL…FPLI), 410-430 (GCID…IYTF), 455-475 (IPLF…SPPL), 492-512 (FEII…YIWI), 533-553 (FFLK…YFYL), and 593-613 (YVAS…FFYF).

The protein belongs to the complex I subunit 5 family. In terms of assembly, composed of 13 different subunits. Subunits NuoA, H, J, K, L, M, N constitute the membrane sector of the complex.

The protein resides in the cell membrane. The catalysed reaction is a quinone + NADH + 5 H(+)(in) = a quinol + NAD(+) + 4 H(+)(out). In terms of biological role, NDH-1 shuttles electrons from NADH, via FMN and iron-sulfur (Fe-S) centers, to quinones in the respiratory chain. Couples the redox reaction to proton translocation (for every two electrons transferred, four hydrogen ions are translocated across the cytoplasmic membrane), and thus conserves the redox energy in a proton gradient. The sequence is that of NADH-quinone oxidoreductase subunit L (nuoL) from Buchnera aphidicola subsp. Acyrthosiphon pisum (strain APS) (Acyrthosiphon pisum symbiotic bacterium).